The following is a 503-amino-acid chain: Glutamate--tRNA ligase (503 aa).

The 'HIGH' region motif lies at 12 to 22; it reads PSPTGYLHVGG. Positions 259–263 match the 'KMSKS' region motif; it reads KLSKR. Lysine 262 provides a ligand contact to ATP.

It belongs to the class-I aminoacyl-tRNA synthetase family. Glutamate--tRNA ligase type 1 subfamily. As to quaternary structure, monomer.

The protein resides in the cytoplasm. The catalysed reaction is tRNA(Glu) + L-glutamate + ATP = L-glutamyl-tRNA(Glu) + AMP + diphosphate. Its function is as follows. Catalyzes the attachment of glutamate to tRNA(Glu) in a two-step reaction: glutamate is first activated by ATP to form Glu-AMP and then transferred to the acceptor end of tRNA(Glu). The sequence is that of Glutamate--tRNA ligase from Chlorobaculum parvum (strain DSM 263 / NCIMB 8327) (Chlorobium vibrioforme subsp. thiosulfatophilum).